The chain runs to 199 residues: Adenylate kinase (199 aa).

An ATP-binding site is contributed by 10 to 15; the sequence is GAGKGT. Residues 30-59 form an NMP region; it reads STGDMLRAAVAARTPVGLQAKSIMESGGLV. Residues threonine 31, arginine 36, 57–59, 85–88, and glutamine 92 contribute to the AMP site; these read GLV and GFPR. An LID region spans residues 126 to 142; it reads KRAAETLARGEAVRKDD. Arginine 127 contacts ATP. AMP-binding residues include arginine 139 and arginine 150. Alanine 178 provides a ligand contact to ATP.

This sequence belongs to the adenylate kinase family. As to quaternary structure, monomer.

It is found in the cytoplasm. It catalyses the reaction AMP + ATP = 2 ADP. The protein operates within purine metabolism; AMP biosynthesis via salvage pathway; AMP from ADP: step 1/1. Its function is as follows. Catalyzes the reversible transfer of the terminal phosphate group between ATP and AMP. Plays an important role in cellular energy homeostasis and in adenine nucleotide metabolism. The chain is Adenylate kinase from Methylobacterium nodulans (strain LMG 21967 / CNCM I-2342 / ORS 2060).